The sequence spans 268 residues: Phosphatidylglycerol--prolipoprotein diacylglyceryl transferase (268 aa).

The next 7 membrane-spanning stretches (helical) occupy residues 27–47 (PALR…MWLL), 66–86 (LLFY…VLFY), 104–124 (GGMS…YIAW), 130–150 (FFAV…AGRI), 181–201 (PSQL…LYWF), 208–228 (VGAV…IVET), and 242–262 (FMTM…YLIL). A 1,2-diacyl-sn-glycero-3-phospho-(1'-sn-glycerol) is bound at residue R149.

Belongs to the Lgt family.

It is found in the cell inner membrane. The catalysed reaction is L-cysteinyl-[prolipoprotein] + a 1,2-diacyl-sn-glycero-3-phospho-(1'-sn-glycerol) = an S-1,2-diacyl-sn-glyceryl-L-cysteinyl-[prolipoprotein] + sn-glycerol 1-phosphate + H(+). Its pathway is protein modification; lipoprotein biosynthesis (diacylglyceryl transfer). Functionally, catalyzes the transfer of the diacylglyceryl group from phosphatidylglycerol to the sulfhydryl group of the N-terminal cysteine of a prolipoprotein, the first step in the formation of mature lipoproteins. The polypeptide is Phosphatidylglycerol--prolipoprotein diacylglyceryl transferase (Shewanella sp. (strain ANA-3)).